The following is a 199-amino-acid chain: Guanylate kinase (199 aa).

Positions 20–198 (GKLIVLTGPS…ALQAIEVALF (179 aa)) constitute a Guanylate kinase-like domain. 27–34 (GPSGVGKG) serves as a coordination point for ATP.

This sequence belongs to the guanylate kinase family.

It localises to the cytoplasm. It carries out the reaction GMP + ATP = GDP + ADP. Its function is as follows. Essential for recycling GMP and indirectly, cGMP. The sequence is that of Guanylate kinase from Trichormus variabilis (strain ATCC 29413 / PCC 7937) (Anabaena variabilis).